The chain runs to 474 residues: Dihydrolipoyl dehydrogenase (474 aa).

FAD-binding positions include 34-42, lysine 51, and glycine 114; that span reads EKEKLGGTC. Residues cysteine 42 and cysteine 47 are joined by a disulfide bond. Residues 188–192, glutamate 211, valine 245, and 278–281 each bind NAD(+); these read GGGVI and SIGR. Aspartate 320 and alanine 328 together coordinate FAD. Histidine 453 acts as the Proton acceptor in catalysis.

Belongs to the class-I pyridine nucleotide-disulfide oxidoreductase family. In terms of assembly, homodimer. FAD serves as cofactor.

Its subcellular location is the cytoplasm. It catalyses the reaction N(6)-[(R)-dihydrolipoyl]-L-lysyl-[protein] + NAD(+) = N(6)-[(R)-lipoyl]-L-lysyl-[protein] + NADH + H(+). Its function is as follows. The branched-chain alpha-keto dehydrogenase complex catalyzes the overall conversion of alpha-keto acids to acyl-CoA and CO(2). It contains multiple copies of 3 enzymatic components: branched-chain alpha-keto acid decarboxylase (E1), lipoamide acyltransferase (E2) and lipoamide dehydrogenase (E3). This chain is Dihydrolipoyl dehydrogenase (bfmBC), found in Bacillus subtilis (strain 168).